The sequence spans 342 residues: MAKRNAVVVTHTRLRQTGTVVAEAVSQLRVAGFEVAIIDNTEAPDFGVQPPCVSDDTEIVVVLGGDGTILRAAELVHCTQVPILGVNMGHVGFLAEFESFQIDEAIRRVSTHDYSIDERMIAHVDVWLPGATKPIEDWALNDITLERADRGKMVELSIRVDDVEMNSFGADGVIVSTPTGSTAYAFSAGGPVMWPNVKALQLIPLAAHALFARPLIIGSGSTFTIDILDDSMSEGWICCDGRRQRALPQGTRVMVRESRDTLRLARLSGVPFTNRLVSKFDLPVVGWREHARNEASSQSLHHGHTFPAAAYAAGVAVAVAGDAGVAGTDPDKPGERDGKAGA.

The active-site Proton acceptor is the Asp-66. Residues 66–67 (DG), Arg-71, 141–142 (ND), Lys-152, Asp-171, 182–187 (TAYAFS), and Ala-206 each bind NAD(+).

This sequence belongs to the NAD kinase family. It depends on a divalent metal cation as a cofactor.

The protein resides in the cytoplasm. The enzyme catalyses NAD(+) + ATP = ADP + NADP(+) + H(+). Involved in the regulation of the intracellular balance of NAD and NADP, and is a key enzyme in the biosynthesis of NADP. Catalyzes specifically the phosphorylation on 2'-hydroxyl of the adenosine moiety of NAD to yield NADP. The chain is NAD kinase from Bifidobacterium longum (strain NCC 2705).